Consider the following 160-residue polypeptide: SsrA-binding protein (160 aa).

Belongs to the SmpB family.

Its subcellular location is the cytoplasm. In terms of biological role, required for rescue of stalled ribosomes mediated by trans-translation. Binds to transfer-messenger RNA (tmRNA), required for stable association of tmRNA with ribosomes. tmRNA and SmpB together mimic tRNA shape, replacing the anticodon stem-loop with SmpB. tmRNA is encoded by the ssrA gene; the 2 termini fold to resemble tRNA(Ala) and it encodes a 'tag peptide', a short internal open reading frame. During trans-translation Ala-aminoacylated tmRNA acts like a tRNA, entering the A-site of stalled ribosomes, displacing the stalled mRNA. The ribosome then switches to translate the ORF on the tmRNA; the nascent peptide is terminated with the 'tag peptide' encoded by the tmRNA and targeted for degradation. The ribosome is freed to recommence translation, which seems to be the essential function of trans-translation. In Photorhabdus laumondii subsp. laumondii (strain DSM 15139 / CIP 105565 / TT01) (Photorhabdus luminescens subsp. laumondii), this protein is SsrA-binding protein.